Consider the following 181-residue polypeptide: UPF0301 protein COXBURSA331_A2219 (181 aa).

It belongs to the UPF0301 (AlgH) family.

The protein is UPF0301 protein COXBURSA331_A2219 of Coxiella burnetii (strain RSA 331 / Henzerling II).